The sequence spans 191 residues: Crossover junction endodeoxyribonuclease RuvC (191 aa).

Active-site residues include aspartate 7, glutamate 67, and aspartate 141. Residues aspartate 7, glutamate 67, and aspartate 141 each contribute to the Mg(2+) site.

It belongs to the RuvC family. As to quaternary structure, homodimer which binds Holliday junction (HJ) DNA. The HJ becomes 2-fold symmetrical on binding to RuvC with unstacked arms; it has a different conformation from HJ DNA in complex with RuvA. In the full resolvosome a probable DNA-RuvA(4)-RuvB(12)-RuvC(2) complex forms which resolves the HJ. The cofactor is Mg(2+).

It localises to the cytoplasm. The catalysed reaction is Endonucleolytic cleavage at a junction such as a reciprocal single-stranded crossover between two homologous DNA duplexes (Holliday junction).. The RuvA-RuvB-RuvC complex processes Holliday junction (HJ) DNA during genetic recombination and DNA repair. Endonuclease that resolves HJ intermediates. Cleaves cruciform DNA by making single-stranded nicks across the HJ at symmetrical positions within the homologous arms, yielding a 5'-phosphate and a 3'-hydroxyl group; requires a central core of homology in the junction. The consensus cleavage sequence is 5'-(A/T)TT(C/G)-3'. Cleavage occurs on the 3'-side of the TT dinucleotide at the point of strand exchange. HJ branch migration catalyzed by RuvA-RuvB allows RuvC to scan DNA until it finds its consensus sequence, where it cleaves and resolves the cruciform DNA. The chain is Crossover junction endodeoxyribonuclease RuvC from Myxococcus xanthus (strain DK1622).